A 411-amino-acid polypeptide reads, in one-letter code: Translation initiation factor 2 subunit gamma (411 aa).

The region spanning 9–203 (QAEVNIGMVG…AIEEFIPTPK (195 aa)) is the tr-type G domain. Positions 18–25 (GHVDHGKT) are G1. Aspartate 21, threonine 25, glycine 46, and threonine 48 together coordinate Mg(2+). 21 to 26 (DHGKTT) contacts GTP. The tract at residues 46–50 (GITIK) is G2. Residues cysteine 61, cysteine 64, cysteine 73, and cysteine 76 each coordinate Zn(2+). The G3 stretch occupies residues 90–93 (DSPG). Residues 146–149 (NKIE) and 181–183 (SAL) contribute to the GTP site. The segment at 146-149 (NKIE) is G4. Residues 181–183 (SAL) form a G5 region.

Belongs to the TRAFAC class translation factor GTPase superfamily. Classic translation factor GTPase family. EIF2G subfamily. Heterotrimer composed of an alpha, a beta and a gamma chain. The cofactor is Mg(2+).

The enzyme catalyses GTP + H2O = GDP + phosphate + H(+). EIF-2 functions in the early steps of protein synthesis by forming a ternary complex with GTP and initiator tRNA. The sequence is that of Translation initiation factor 2 subunit gamma from Pyrococcus furiosus (strain ATCC 43587 / DSM 3638 / JCM 8422 / Vc1).